The following is a 136-amino-acid chain: Protein PsiE homolog (136 aa).

Transmembrane regions (helical) follow at residues 15-35 (AMQAVLNLALLCLGIILVVFL), 58-78 (VEGLVVYFLYFEFIALIVKYF), 82-102 (FHFPLRYFVYIGITAIVRLII), and 108-128 (PLAVLIYSAAILILVITLWLC).

The protein belongs to the PsiE family.

The protein localises to the cell inner membrane. The chain is Protein PsiE homolog from Klebsiella pneumoniae subsp. pneumoniae (strain ATCC 700721 / MGH 78578).